We begin with the raw amino-acid sequence, 304 residues long: 4-diphosphocytidyl-2-C-methyl-D-erythritol kinase (304 aa).

Residue Lys20 is part of the active site. Position 106–116 (106–116) interacts with ATP; it reads PVASGIGGGSG. Asp148 is a catalytic residue.

It belongs to the GHMP kinase family. IspE subfamily.

It carries out the reaction 4-CDP-2-C-methyl-D-erythritol + ATP = 4-CDP-2-C-methyl-D-erythritol 2-phosphate + ADP + H(+). The protein operates within isoprenoid biosynthesis; isopentenyl diphosphate biosynthesis via DXP pathway; isopentenyl diphosphate from 1-deoxy-D-xylulose 5-phosphate: step 3/6. Functionally, catalyzes the phosphorylation of the position 2 hydroxy group of 4-diphosphocytidyl-2C-methyl-D-erythritol. This is 4-diphosphocytidyl-2-C-methyl-D-erythritol kinase from Bartonella bacilliformis (strain ATCC 35685 / KC583 / Herrer 020/F12,63).